Consider the following 429-residue polypeptide: Saccharopine dehydrogenase-like oxidoreductase (429 aa).

Position 2 is an N-acetylalanine (Ala2). Phosphoserine occurs at positions 209, 215, and 217.

This sequence belongs to the saccharopine dehydrogenase family.

This is Saccharopine dehydrogenase-like oxidoreductase (Sccpdh) from Mus musculus (Mouse).